The following is a 494-amino-acid chain: Glycerol kinase (494 aa).

Threonine 13 is an ADP binding site. Positions 13, 14, and 15 each coordinate ATP. Residue threonine 13 coordinates sn-glycerol 3-phosphate. Position 17 (arginine 17) interacts with ADP. Residues arginine 83, glutamate 84, tyrosine 135, and aspartate 244 each contribute to the sn-glycerol 3-phosphate site. Residues arginine 83, glutamate 84, tyrosine 135, aspartate 244, and glutamine 245 each coordinate glycerol. ADP is bound by residues threonine 266 and glycine 309. Positions 266, 309, 313, and 410 each coordinate ATP. ADP contacts are provided by glycine 410 and asparagine 414.

This sequence belongs to the FGGY kinase family.

The catalysed reaction is glycerol + ATP = sn-glycerol 3-phosphate + ADP + H(+). It functions in the pathway polyol metabolism; glycerol degradation via glycerol kinase pathway; sn-glycerol 3-phosphate from glycerol: step 1/1. Its activity is regulated as follows. Inhibited by fructose 1,6-bisphosphate (FBP). Functionally, key enzyme in the regulation of glycerol uptake and metabolism. Catalyzes the phosphorylation of glycerol to yield sn-glycerol 3-phosphate. The chain is Glycerol kinase from Shewanella sp. (strain ANA-3).